Here is a 557-residue protein sequence, read N- to C-terminus: Urocanate hydratase (557 aa).

NAD(+) is bound by residues 53–54 (GG), Gln131, 177–179 (GMG), 197–202 (ECQQSR), 243–244 (NA), 264–268 (QTSAH), 274–275 (YL), and 323–324 (YG). Cys411 is an active-site residue. NAD(+)-binding positions include 455-456 (RE) and Gly493.

Homodimer. NAD(+) is required as a cofactor.

The protein resides in the cytoplasm. The catalysed reaction is 4-imidazolone-5-propanoate = trans-urocanate + H2O. The protein operates within amino-acid degradation; L-histidine degradation into L-glutamate; N-formimidoyl-L-glutamate from L-histidine: step 2/3. Catalyzes the conversion of urocanate to 4-imidazolone-5-propionate. In Pseudomonas putida (Arthrobacter siderocapsulatus), this protein is Urocanate hydratase.